The chain runs to 287 residues: Glycine--tRNA ligase alpha subunit (287 aa).

This sequence belongs to the class-II aminoacyl-tRNA synthetase family. As to quaternary structure, tetramer of two alpha and two beta subunits.

The protein resides in the cytoplasm. The catalysed reaction is tRNA(Gly) + glycine + ATP = glycyl-tRNA(Gly) + AMP + diphosphate. The sequence is that of Glycine--tRNA ligase alpha subunit from Campylobacter curvus (strain 525.92).